Consider the following 172-residue polypeptide: Alpha-crystallin A chain (172 aa).

M1 carries the post-translational modification N-acetylmethionine. Residues 1–63 (MDVTIQHPWF…RTVLDSGISE (63 aa)) form a required for complex formation with BFSP1 and BFSP2 region. Residue Q6 is modified to Deamidated glutamine; partial. A Phosphoserine modification is found at S45. Q50 is modified (deamidated glutamine; partial). The sHSP domain occupies 52 to 163 (LFRTVLDSGI…HERAIPVARE (112 aa)). K70 carries the N6-acetyllysine modification. At Q90 the chain carries Deamidated glutamine; partial. K99 carries the post-translational modification N6-acetyllysine. Zn(2+) is bound at residue H100. N101 is subject to Deamidated asparagine; partial. 2 residues coordinate Zn(2+): E102 and H107. A Phosphoserine modification is found at S122. N123 bears the Deamidated asparagine; partial mark. Residue Q147 is modified to Deamidated glutamine; partial. H154 contributes to the Zn(2+) binding site. Residue S168 is glycosylated (O-linked (GlcNAc) serine).

The protein belongs to the small heat shock protein (HSP20) family. Heteromer composed of three CRYAA and one CRYAB subunits. Inter-subunit bridging via zinc ions enhances stability, which is crucial as there is no protein turn over in the lens. Can also form homodimers and homotetramers (dimers of dimers) which serve as the building blocks of homooligomers. Within homooligomers, the zinc-binding motif is created from residues of 3 different molecules. His-100 and Glu-102 from one molecule are ligands of the zinc ion, and His-107 and His-154 residues from additional molecules complete the site with tetrahedral coordination geometry. Part of a complex required for lens intermediate filament formation composed of BFSP1, BFSP2 and CRYAA. In terms of processing, acetylation at Lys-70 may increase chaperone activity. Post-translationally, undergoes age-dependent proteolytical cleavage at the C-terminus.

The protein localises to the cytoplasm. It is found in the nucleus. Its function is as follows. Contributes to the transparency and refractive index of the lens. Acts as a chaperone, preventing aggregation of various proteins under a wide range of stress conditions. Required for the correct formation of lens intermediate filaments as part of a complex composed of BFSP1, BFSP2 and CRYAA. This is Alpha-crystallin A chain (CRYAA) from Macaca mulatta (Rhesus macaque).